A 102-amino-acid polypeptide reads, in one-letter code: NADH-quinone oxidoreductase subunit K (102 aa).

3 consecutive transmembrane segments (helical) span residues 5-25 (LEHY…GIFV), 31-51 (IVIL…MVAF), and 66-86 (FVLT…VVFF).

The protein belongs to the complex I subunit 4L family. In terms of assembly, NDH-1 is composed of 14 different subunits. Subunits NuoA, H, J, K, L, M, N constitute the membrane sector of the complex.

Its subcellular location is the cellular chromatophore membrane. The catalysed reaction is a quinone + NADH + 5 H(+)(in) = a quinol + NAD(+) + 4 H(+)(out). Its function is as follows. NDH-1 shuttles electrons from NADH, via FMN and iron-sulfur (Fe-S) centers, to quinones in the respiratory chain. The immediate electron acceptor for the enzyme in this species is believed to be ubiquinone. Couples the redox reaction to proton translocation (for every two electrons transferred, four hydrogen ions are translocated across the cytoplasmic membrane), and thus conserves the redox energy in a proton gradient. In Rhodobacter capsulatus (Rhodopseudomonas capsulata), this protein is NADH-quinone oxidoreductase subunit K.